We begin with the raw amino-acid sequence, 291 residues long: 4-hydroxy-tetrahydrodipicolinate synthase (291 aa).

Thr44 provides a ligand contact to pyruvate. Tyr132 serves as the catalytic Proton donor/acceptor. The active-site Schiff-base intermediate with substrate is the Lys160. Ile202 serves as a coordination point for pyruvate.

The protein belongs to the DapA family. As to quaternary structure, homotetramer; dimer of dimers.

It is found in the cytoplasm. The catalysed reaction is L-aspartate 4-semialdehyde + pyruvate = (2S,4S)-4-hydroxy-2,3,4,5-tetrahydrodipicolinate + H2O + H(+). The protein operates within amino-acid biosynthesis; L-lysine biosynthesis via DAP pathway; (S)-tetrahydrodipicolinate from L-aspartate: step 3/4. In terms of biological role, catalyzes the condensation of (S)-aspartate-beta-semialdehyde [(S)-ASA] and pyruvate to 4-hydroxy-tetrahydrodipicolinate (HTPA). This is 4-hydroxy-tetrahydrodipicolinate synthase from Parvibaculum lavamentivorans (strain DS-1 / DSM 13023 / NCIMB 13966).